The chain runs to 142 residues: Large ribosomal subunit protein uL13 (142 aa).

Belongs to the universal ribosomal protein uL13 family. In terms of assembly, part of the 50S ribosomal subunit.

Functionally, this protein is one of the early assembly proteins of the 50S ribosomal subunit, although it is not seen to bind rRNA by itself. It is important during the early stages of 50S assembly. The sequence is that of Large ribosomal subunit protein uL13 from Azoarcus sp. (strain BH72).